The primary structure comprises 112 residues: Nucleoid-associated protein lpg2755 (112 aa).

The protein belongs to the YbaB/EbfC family. As to quaternary structure, homodimer.

It is found in the cytoplasm. The protein resides in the nucleoid. Binds to DNA and alters its conformation. May be involved in regulation of gene expression, nucleoid organization and DNA protection. This chain is Nucleoid-associated protein lpg2755, found in Legionella pneumophila subsp. pneumophila (strain Philadelphia 1 / ATCC 33152 / DSM 7513).